Here is a 484-residue protein sequence, read N- to C-terminus: MARPLQRPAGLGPFVLLWLLLPAPSGRGVQAGRAWPVPRCPAACEPTRCPPLPRCSVGTAPVLDRCGCCRVCAAAEGEACGGPLGRPCAPGLQCLAPRAPRLLGGRPLGTCGCPAAGATVCGSDGRTYRSLCALRAENRAARLRGALPAVPVQKGDCGDPGTGSAGWLRNKFNFIASVVEKVAPSVVHLQLFRRDRSPLGSEDVPVSSASGFIVSEDGLIVTNAHVLTNQQRIQVELQSGVQYEATVKDVDHKLDLALIKIEPNADLPVLLLGKSSDLRAGEFVVALGSPFSLQNTVTAGIVSTTQRGGKELGLKDSDMDYIQTDAIINHGNSGGPLVNLDGDVIGINTLKVTAGISFAIPSDRIRQFLAEFHERQLKGKALSQKKYLGLRMLPLTMNLLQEMKRQDPEFPDVASGVFVHEVIQGTAAESSGLKDHDVIVSINGLPVTTTTDVIEAVKANDSLSLLVRRKSQTLILTVTPEIIN.

The N-terminal stretch at Met1–Gly28 is a signal peptide. Residues Pro36 to Pro114 enclose the IGFBP N-terminal domain. 8 disulfides stabilise this stretch: Cys40-Cys66, Cys44-Cys68, Cys49-Cys69, Cys55-Cys72, Cys80-Cys94, Cys88-Cys111, Cys113-Cys132, and Cys121-Cys157. Residues Gly105–Asp159 form the Kazal-like domain. Residues Ala209 to Leu369 form a serine protease region. Active-site charge relay system residues include His225, Asp255, and Ser333. Positions Leu390–Gln472 constitute a PDZ domain.

This sequence belongs to the peptidase S1C family.

It is found in the secreted. Its function is as follows. Serine protease. This Bos taurus (Bovine) protein is Serine protease HTR4 (HTRA4).